A 380-amino-acid polypeptide reads, in one-letter code: Chorismate synthase (380 aa).

Residue R47 coordinates NADP(+). FMN contacts are provided by residues 124–126, G288, 303–307, and R329; these read RSS and KPTST.

The protein belongs to the chorismate synthase family. As to quaternary structure, homotetramer. FMNH2 is required as a cofactor.

The catalysed reaction is 5-O-(1-carboxyvinyl)-3-phosphoshikimate = chorismate + phosphate. Its pathway is metabolic intermediate biosynthesis; chorismate biosynthesis; chorismate from D-erythrose 4-phosphate and phosphoenolpyruvate: step 7/7. Its function is as follows. Catalyzes the anti-1,4-elimination of the C-3 phosphate and the C-6 proR hydrogen from 5-enolpyruvylshikimate-3-phosphate (EPSP) to yield chorismate, which is the branch point compound that serves as the starting substrate for the three terminal pathways of aromatic amino acid biosynthesis. This reaction introduces a second double bond into the aromatic ring system. In Leptospira borgpetersenii serovar Hardjo-bovis (strain JB197), this protein is Chorismate synthase.